The following is a 195-amino-acid chain: SPbeta prophage-derived uncharacterized protein YotM (195 aa).

This chain is SPbeta prophage-derived uncharacterized protein YotM (yotM), found in Bacillus subtilis (strain 168).